A 279-amino-acid chain; its full sequence is Reaction center protein L chain (279 aa).

The next 3 membrane-spanning stretches (helical) occupy residues 33 to 56 (GFFGVTTLFFSVLGTALIIWGASQ), 85 to 113 (GLWQIITVCAIGAFVSWALREVEICRKLG), and 116 to 141 (YHVPIAFSFAILAYVTLVVIRPILMG). (7R,8Z)-bacteriochlorophyll b contacts are provided by His154 and His174. A helical transmembrane segment spans residues 171-200 (NPAHMLAITFFFTTTLAMSMHGGLILSAAN). Fe cation is bound at residue His191. Phe217 serves as a coordination point for a ubiquinone. Residues 226-252 (GSLGIHRLGLFLALSAAFWSAVCIVIS) form a helical membrane-spanning segment. His231 is a binding site for Fe cation.

Belongs to the reaction center PufL/M/PsbA/D family. Reaction center is composed of four bacteriochlorophylls, two bacteriopheophytins, two ubiquinones, one iron, and three highly hydrophobic polypeptide chains (designated L, M, and H).

Its subcellular location is the cell inner membrane. Functionally, the reaction center is a membrane-bound complex that mediates the initial photochemical event in the electron transfer process of photosynthesis. This chain is Reaction center protein L chain (pufL), found in Rubrivivax gelatinosus (Rhodocyclus gelatinosus).